The sequence spans 606 residues: Vitamin B12 transporter BtuB (606 aa).

Residues M1–A22 form the signal peptide. The TonB box motif lies at D29–N36. The TBDR plug domain maps to P41–T153. The TBDR beta-barrel domain maps to S158–F606. Positions L589–F606 match the TonB C-terminal box motif.

The protein belongs to the TonB-dependent receptor family. BtuB (TC 1.B.14.3.1) subfamily.

It is found in the cell outer membrane. Its function is as follows. Involved in the active translocation of vitamin B12 (cyanocobalamin) across the outer membrane to the periplasmic space. It derives its energy for transport by interacting with the trans-periplasmic membrane protein TonB. The sequence is that of Vitamin B12 transporter BtuB from Vibrio vulnificus (strain CMCP6).